The chain runs to 216 residues: Elongation factor Ts (216 aa).

The involved in Mg(2+) ion dislocation from EF-Tu stretch occupies residues 81 to 84 (TDFV).

It belongs to the EF-Ts family.

It is found in the cytoplasm. Associates with the EF-Tu.GDP complex and induces the exchange of GDP to GTP. It remains bound to the aminoacyl-tRNA.EF-Tu.GTP complex up to the GTP hydrolysis stage on the ribosome. This Citrifermentans bemidjiense (strain ATCC BAA-1014 / DSM 16622 / JCM 12645 / Bem) (Geobacter bemidjiensis) protein is Elongation factor Ts.